We begin with the raw amino-acid sequence, 59 residues long: Thrombostatin (59 aa).

4 disulfide bridges follow: Cys3–Cys22, Cys17–Cys37, Cys39–Cys51, and Cys52–Cys57. The short motif at 43 to 45 (RGD) is the Cell attachment site element.

This sequence belongs to the three-finger toxin family. Short-chain subfamily. Antiplatelet toxin sub-subfamily. As to expression, expressed by the venom gland.

It is found in the secreted. Inhibits ADP-induced platelet aggregation and inhibits the binding of purified platelet fibrinogen receptor alpha-IIb/beta-3 (ITGA2B/ITGB3) to immobilized fibrinogen. The sequence is that of Thrombostatin from Dendroaspis angusticeps (Eastern green mamba).